The following is a 91-amino-acid chain: Putative pterin-4-alpha-carbinolamine dehydratase (91 aa).

It belongs to the pterin-4-alpha-carbinolamine dehydratase family.

The catalysed reaction is (4aS,6R)-4a-hydroxy-L-erythro-5,6,7,8-tetrahydrobiopterin = (6R)-L-erythro-6,7-dihydrobiopterin + H2O. The protein is Putative pterin-4-alpha-carbinolamine dehydratase of Sulfolobus acidocaldarius (strain ATCC 33909 / DSM 639 / JCM 8929 / NBRC 15157 / NCIMB 11770).